The chain runs to 388 residues: LL-diaminopimelate aminotransferase (388 aa).

Residues Tyr13, Gly38, Lys102, Tyr126, and Asn176 each coordinate substrate. Pyridoxal 5'-phosphate is bound by residues 101-102, Tyr126, Asn176, Tyr207, and 235-237; these read SK and SLS. Lys238 is modified (N6-(pyridoxal phosphate)lysine). A pyridoxal 5'-phosphate-binding site is contributed by Arg246. Arg364 serves as a coordination point for substrate.

This sequence belongs to the class-I pyridoxal-phosphate-dependent aminotransferase family. LL-diaminopimelate aminotransferase subfamily. In terms of assembly, homodimer. Requires pyridoxal 5'-phosphate as cofactor.

The enzyme catalyses (2S,6S)-2,6-diaminopimelate + 2-oxoglutarate = (S)-2,3,4,5-tetrahydrodipicolinate + L-glutamate + H2O + H(+). The protein operates within amino-acid biosynthesis; L-lysine biosynthesis via DAP pathway; LL-2,6-diaminopimelate from (S)-tetrahydrodipicolinate (aminotransferase route): step 1/1. Functionally, involved in the synthesis of meso-diaminopimelate (m-DAP or DL-DAP), required for both lysine and peptidoglycan biosynthesis. Catalyzes the direct conversion of tetrahydrodipicolinate to LL-diaminopimelate. This Dehalococcoides mccartyi (strain ATCC BAA-2266 / KCTC 15142 / 195) (Dehalococcoides ethenogenes (strain 195)) protein is LL-diaminopimelate aminotransferase.